Reading from the N-terminus, the 207-residue chain is 23 kDa calcium-binding protein (207 aa).

A Blocked amino end (Met) modification is found at Met1. EF-hand domains lie at 17–52 (AKLD…TFEN), 60–95 (VTAD…CLKK), 119–154 (MKLD…TYKQ), and 161–196 (PTEA…GLKK). Asp30, Asn32, Asn34, Thr36, Glu41, Asp73, Asp75, Asn77, Glu84, Asp132, Asp134, Ser136, Gln138, Glu143, Asp174, Asp176, Asn178, Thr180, and Glu185 together coordinate Ca(2+).

Its function is as follows. Expected to play a crucial role in calcium-dependent regulation of ciliary movement. In Tetrahymena thermophila, this protein is 23 kDa calcium-binding protein.